Here is an 837-residue protein sequence, read N- to C-terminus: ABC transporter A family member 8 (837 aa).

Transmembrane regions (helical) follow at residues Tyr29–Ile49, Val244–Leu264, Leu303–Gly323, Phe326–Phe346, Val356–Asn376, Gly393–Leu413, and Leu455–Ala475. Positions Ile516–Ile750 constitute an ABC transporter domain. Gly553–Ser560 serves as a coordination point for ATP.

This sequence belongs to the ABC transporter superfamily. ABCA family.

Its subcellular location is the membrane. The chain is ABC transporter A family member 8 (abcA8) from Dictyostelium discoideum (Social amoeba).